The sequence spans 80 residues: UPF0291 protein YlaC (80 aa).

It belongs to the UPF0291 family.

The protein resides in the cytoplasm. This is UPF0291 protein YlaC (ylcA) from Lactococcus lactis subsp. lactis (strain IL1403) (Streptococcus lactis).